The primary structure comprises 189 residues: Interferon alpha-16 (189 aa).

A signal peptide spans methionine 1 to glycine 23. 2 disulfide bridges follow: cysteine 24–cysteine 122 and cysteine 52–cysteine 162.

It belongs to the alpha/beta interferon family.

It is found in the secreted. Its function is as follows. Produced by macrophages, IFN-alpha have antiviral activities. Interferon stimulates the production of two enzymes: a protein kinase and an oligoadenylate synthetase. This is Interferon alpha-16 (IFNA16) from Homo sapiens (Human).